The following is a 553-amino-acid chain: Keratin, type II cytoskeletal 6A (553 aa).

Positions 1-20 (MSTKTTIKSQTSHRGYSASS) are enriched in polar residues. The disordered stretch occupies residues 1–21 (MSTKTTIKSQTSHRGYSASSA). Residues 1-151 (MSTKTTIKSQ…DPTIQRVRTE (151 aa)) are head. The tract at residues 152–187 (EREQIKTLNNKFASFIDKVRFLEQQNKVLDTKWALL) is coil 1A. Positions 152 to 465 (EREQIKTLNN…KLLEGEECRL (314 aa)) constitute an IF rod domain. The segment at 188 to 206 (QEQGTKTVRQNLEPMFEQY) is linker 1. Residues 207–298 (ISNLRRQLDS…ALYEAELSQM (92 aa)) are coil 1B. Residues 299-322 (QTHISDTSVVLSMDNNRSLDLDSI) are linker 12. The segment at 323–461 (IAEVKAQYED…ATYRKLLEGE (139 aa)) is coil 2. A tail region spans residues 462-553 (ECRLNGEGVG…TSSSKKSYRQ (92 aa)). The interval 528-553 (LSSSGGLSSSTIKYTTTSSSKKSYRQ) is disordered. The span at 531–553 (SGGLSSSTIKYTTTSSSKKSYRQ) shows a compositional bias: low complexity.

Belongs to the intermediate filament family. In terms of assembly, heterodimer of a type I and a type II keratin. KRT6 isomers associate with KRT16 and/or KRT17. Interacts with TCHP. As to expression, predominates in the adult trunk skin, tongue, trachea/esophagus and eye. In adult skin, localization is restricted to hair follicles, where it is localized predominantly in the outer root sheath.

Its function is as follows. Epidermis-specific type I keratin involved in wound healing. Involved in the activation of follicular keratinocytes after wounding, while it does not play a major role in keratinocyte proliferation or migration. Participates in the regulation of epithelial migration by inhibiting the activity of SRC during wound repair. The protein is Keratin, type II cytoskeletal 6A (Krt6a) of Mus musculus (Mouse).